Consider the following 240-residue polypeptide: 26.7 kDa heat shock protein, chloroplastic (240 aa).

The transit peptide at 1–43 (MAAPFALVSRVSPAARLPIRAAWRRARPTVGLPSSGRARQLAV) directs the protein to the chloroplast. The interval 59-84 (HVNQDGGNQQGNAVQRRPRRSSALDG) is disordered. Positions 126 to 240 (LATGEVRMPW…ERKVIDVQVQ (115 aa)) constitute a sHSP domain.

The protein belongs to the small heat shock protein (HSP20) family. As to quaternary structure, may form oligomeric structures. As to expression, expressed in roots, stems, leaves, spikelets and embryos.

Its subcellular location is the plastid. It localises to the chloroplast. The sequence is that of 26.7 kDa heat shock protein, chloroplastic (HSP26.7) from Oryza sativa subsp. japonica (Rice).